The following is a 185-amino-acid chain: Photosystem I assembly protein Ycf4 (185 aa).

2 consecutive transmembrane segments (helical) span residues 21–43 (NFCW…TSSY) and 63–85 (GLVM…CTIL).

It belongs to the Ycf4 family.

The protein localises to the plastid. The protein resides in the chloroplast thylakoid membrane. In terms of biological role, seems to be required for the assembly of the photosystem I complex. In Brassica oleracea (Wild cabbage), this protein is Photosystem I assembly protein Ycf4.